The sequence spans 613 residues: Dihydroxy-acid dehydratase (613 aa).

D81 lines the Mg(2+) pocket. C122 contributes to the [2Fe-2S] cluster binding site. Mg(2+)-binding residues include D123 and K124. At K124 the chain carries N6-carboxylysine. C195 is a binding site for [2Fe-2S] cluster. E491 provides a ligand contact to Mg(2+). Catalysis depends on S517, which acts as the Proton acceptor.

This sequence belongs to the IlvD/Edd family. In terms of assembly, homodimer. [2Fe-2S] cluster serves as cofactor. It depends on Mg(2+) as a cofactor.

The enzyme catalyses (2R)-2,3-dihydroxy-3-methylbutanoate = 3-methyl-2-oxobutanoate + H2O. The catalysed reaction is (2R,3R)-2,3-dihydroxy-3-methylpentanoate = (S)-3-methyl-2-oxopentanoate + H2O. It functions in the pathway amino-acid biosynthesis; L-isoleucine biosynthesis; L-isoleucine from 2-oxobutanoate: step 3/4. It participates in amino-acid biosynthesis; L-valine biosynthesis; L-valine from pyruvate: step 3/4. In terms of biological role, functions in the biosynthesis of branched-chain amino acids. Catalyzes the dehydration of (2R,3R)-2,3-dihydroxy-3-methylpentanoate (2,3-dihydroxy-3-methylvalerate) into 2-oxo-3-methylpentanoate (2-oxo-3-methylvalerate) and of (2R)-2,3-dihydroxy-3-methylbutanoate (2,3-dihydroxyisovalerate) into 2-oxo-3-methylbutanoate (2-oxoisovalerate), the penultimate precursor to L-isoleucine and L-valine, respectively. The chain is Dihydroxy-acid dehydratase from Vibrio parahaemolyticus serotype O3:K6 (strain RIMD 2210633).